The following is a 210-amino-acid chain: Large ribosomal subunit protein uL3 (210 aa).

Residues 133 to 152 (ATHGNSLSHRVHGSTGQNQT) are disordered. An N5-methylglutamine modification is found at Q151.

It belongs to the universal ribosomal protein uL3 family. In terms of assembly, part of the 50S ribosomal subunit. Forms a cluster with proteins L14 and L19. Post-translationally, methylated by PrmB.

In terms of biological role, one of the primary rRNA binding proteins, it binds directly near the 3'-end of the 23S rRNA, where it nucleates assembly of the 50S subunit. The chain is Large ribosomal subunit protein uL3 from Francisella philomiragia subsp. philomiragia (strain ATCC 25017 / CCUG 19701 / FSC 153 / O#319-036).